Here is a 420-residue protein sequence, read N- to C-terminus: MVEKRVQPLARDAMAYVLAGGRGSRLKELTDRRAKPAVYFGGKARIIDFALSNALNSGIRRIGVATQYKAHSLIRHMQRGWNFFRPERNESFDILPASQRVSETQWYEGTADAVYQNIDIIQDYGVEYMVILAGDHVYKMDYEWMLQQHVDSGADVTIGCLEVPRMEAVGFGVMHVNDKDEIIAFVEKPADPPPIPDKPDFALASMGIYVFHTKFLLDALRRDAADPNSSRDFGKDIIPYIVKNGKAVAHRFAKSCVRSDFEHEPYWRDVGTIDAYWQANIDLTAIVPELDIYDKSWPIWTYAEITPPAKFVHDDEDRRGSATSSVVSGDCIISGAMLNNSLLFTGVRANSFSKMEGAVILPNVKIGRRAQLKNVVIDHGVVIPEGLVVGEDAELDAKRFRRTESGICLITQPMIDKLDI.

Residues Tyr-107, Gly-172, 187–188 (EK), and Ser-205 contribute to the alpha-D-glucose 1-phosphate site.

It belongs to the bacterial/plant glucose-1-phosphate adenylyltransferase family. As to quaternary structure, homotetramer.

It carries out the reaction alpha-D-glucose 1-phosphate + ATP + H(+) = ADP-alpha-D-glucose + diphosphate. Its pathway is glycan biosynthesis; glycogen biosynthesis. Involved in the biosynthesis of ADP-glucose, a building block required for the elongation reactions to produce glycogen. Catalyzes the reaction between ATP and alpha-D-glucose 1-phosphate (G1P) to produce pyrophosphate and ADP-Glc. In Rhizobium johnstonii (strain DSM 114642 / LMG 32736 / 3841) (Rhizobium leguminosarum bv. viciae), this protein is Glucose-1-phosphate adenylyltransferase.